Consider the following 504-residue polypeptide: Protein Dok-7 (504 aa).

Positions 4-109 (AALVEGQVKL…WDTRIRYALG (106 aa)) constitute a PH domain. One can recognise an IRS-type PTB domain in the interval 105 to 210 (RYALGEVHRF…RGISPTKGPF (106 aa)). Disordered stretches follow at residues 210–232 (FGLRPVLPDPSSGGPSASEERVA), 248–348 (LSHS…HSSY), and 371–483 (SLLS…PHAG). The segment covering 263 to 280 (LSSSSSEASHSDISASSR) has biased composition (low complexity). Composition is skewed to polar residues over residues 285-297 (PEQSSSSAGTSQE), 331-341 (GRQSSSDSGIA), and 421-430 (PASQGSSDHG).

Homodimer. Forms a heterotetramer composed of 2 DOK7 and 2 MUSK molecules which facilitates MUSK trans-autophosphorylation on tyrosine residue and activation. Interacts (via IRS-type PTB domain) with MUSK (via cytoplasmic part); requires MUSK phosphorylation.

Its subcellular location is the cell membrane. The protein resides in the synapse. Probable muscle-intrinsic activator of MUSK that plays an essential role in neuromuscular synaptogenesis. Acts in aneural activation of MUSK and subsequent acetylcholine receptor (AchR) clustering in myotubes. Induces autophosphorylation of MUSK. The chain is Protein Dok-7 (Dok7) from Mus musculus (Mouse).